Consider the following 308-residue polypeptide: Probable lipid phosphate phosphatase 4 (308 aa).

The next 6 membrane-spanning stretches (helical) occupy residues 26–46, 66–86, 93–113, 162–182, 193–213, and 226–246; these read WLIL…EPFH, IPMW…FIVY, VYDL…TGVT, SFPS…AWYL, GHVA…LIGI, and VFAG…HFFP. The tract at residues 274–308 is disordered; the sequence is MTRTGSRGMLGNDVEPGNSASSPHDRHRESTDSDF. The segment covering 296–308 has biased composition (basic and acidic residues); sequence PHDRHRESTDSDF.

This sequence belongs to the PA-phosphatase related phosphoesterase family.

The protein resides in the membrane. The sequence is that of Probable lipid phosphate phosphatase 4 (LPP4) from Arabidopsis thaliana (Mouse-ear cress).